We begin with the raw amino-acid sequence, 187 residues long: Adenine phosphoribosyltransferase (187 aa).

This sequence belongs to the purine/pyrimidine phosphoribosyltransferase family. As to quaternary structure, homodimer.

It is found in the cytoplasm. It catalyses the reaction AMP + diphosphate = 5-phospho-alpha-D-ribose 1-diphosphate + adenine. The protein operates within purine metabolism; AMP biosynthesis via salvage pathway; AMP from adenine: step 1/1. In terms of biological role, catalyzes a salvage reaction resulting in the formation of AMP, that is energically less costly than de novo synthesis. The polypeptide is Adenine phosphoribosyltransferase (Burkholderia pseudomallei (strain 668)).